The primary structure comprises 429 residues: Cyclin-B2-1 (429 aa).

This sequence belongs to the cyclin family. Cyclin AB subfamily. In terms of assembly, interacts with CDC20-1 and CDC20-2. Expressed in roots, stems, leaves, flowers and siliques.

The sequence is that of Cyclin-B2-1 (CYCB2-1) from Arabidopsis thaliana (Mouse-ear cress).